The following is a 2193-amino-acid chain: MGSQVSTQRSGSHENSNSATEGSTINYTTINYYKDSYAATAGKQSLKQDPDKFANPVKDIFTEMAAPLKSPSAEACGYSDRVAQLTIGNSTITTQEAANIIVGYGEWPSYCSDNDATAVDKPTRPDVSVNRFYTLDTKLWEKSSKGWYWKFPDVLTETGVFGPNAQFHYLYRSGFCIHVQCNASKFHQGALLVAVLPEYVIGTVAGGTGTENSHPPYKQTQPGADGFELQHPYVLDAGIPISQLTVCPHQWINLRTNNCATIIVPYMNTLPFDSALNHCNFGLLVVPISPLDFDQGATPVIPITITLAPMCSEFAGLRQAVTQGFPTELKPGTNQFLTTDDGVSAPILPNFHPTPCIHIPGEVRNLLELCQVETILEVNNVPTNATSLMERLRFPVSAQAGKGELCAVFRADPGRDGPWQSTMLGQLCGYYTQWSGSLEVTFMFTGSFMATGKMLIAYTPPGGPLPKDRATAMLGTHVIWDFGLQSSVTLVIPWISNTHYRAHARDGVFDYYTTGLVSIWYQTNYVVPIGAPNTAYIIALAAAQKNFTMKLCKDTSDILETATIQGDRVADVIESSIGDSVSKALTPALPAPTGPDTQVSSHRLDTGKVPALQAAEIGASSNASDESMIETRCVLNSHSTAETTLDSFFSRAGLVGEIDLPLKGTTNPNGYANWDIDITGYAQMRRKVELFTYMRFDAEFTFVACTPTGRVVPQLLQYMFVPPGAPKPDSRDSLAWPTATNPSVFVKSSDPPAQVSVPFMSPASAYQWFYDGYPTFGEHKQEKDLEYGACPNNMMGTFSVRTVGSSKSEYSLVIRIYMRMKHVRAWIPRPMRNQNYLFKSNPNYAGDSIKPTGTSRTAITTLGKFGQQSGAIYVGNFRVVNRHLATHTDWANLVWEDSSRDLLVSSTTAQGCDTIARCNCQTGVYYCNSRRKHYPVSFSKPSLVFVEASEYYPARYQSHLMLAEGHSEPGDCGGILRCQHGVVGIVSTGGSGLVGFADVRDLLWLDEEAMEQGVSDYIKGLGRAFGTGFTDAVSREVEALKNHLIGSEGAVEKILKNLVKLISALVIVIRSDYDMVTLTATLALIGCHGSPWAWIKSKTASILGIPMAQKQSASWLKKFNDMANAAKGLEWIFNKISKFIDWLKEKIIPAAKEKVEFLNNLKQLPLLENQVSNLEQSAASQEDLEAMFGNVIYLAHFCRKFQPLYATEAKRVYALEKRMNNYMQFKSKHRIEPVCLIIRGSPGTGKSLATGIIARAIADKYRSSVYSLPPDPDHFDGYKQQVVAVMDDLCQNPDGKDMSLFCQMVSTVDFVPPMASLEEKGVSFTSKFVIASTNASNIIVPTVSDSDAIRRRFYMDCDIEVTDSYKTDLGRLDAGRAAKLCTENNTANFKRCSPLVCGKAIQLRDRKSKVRYSVDTVVSELIREYNNRSAIGNTIEALFQGPPKFRPIRISLEEKPAPDAISDLLASVDSEEVRQYCREQGWIIPETPTNVERHLNRAVLVMQSIATVVAVVSLVYVIYKLFAGFQGAYSGAPKPILKKPVLRTATVQGPSLDFALSLLRRNIRQAQTDQGHFTMLGVRDRLAILPRHSQPGKTIWVEHKLINVLDAVELVDEQGVNLELTLVTLDTNEKFRDITKCIPEVITGASDATLVINTEHIPSMFVPVGDVVQYGFLNLSGKPTHRTMMYNFPTKPGQCGGVVTSVGKIIGIHIGGNGRQAFCAGLKRSYFASEQGEIQWMKPNRETGRLNINGPTRTKLEPSVFHDVFEGNKEPAVLTSKDPRLEVDFEQALFSKYVGNTLHEPDEYVTQAALHYANQLKQLDINTSKMSMEEACYGTEYLEAIDLHTSAGYPYSALGIKKRDILDPVTRDTSRMKLYMDKYGLDLPNSTYVKDELSSLDKIRKGESRLIEASSLNDPVYPRLTFGHLYEVFHANPGTVTGSAVGCNPDVFWSKLPILLPGSLFAFDYSGYDASLSPVWFRALELVLREIGYSEEAVSLIEGINHTHHVYRNKTYCVLGGMPSGCSGTSIFNSMINNIIIRTLLIKTFKGIDLDELKMVAYGDDVLASYPFPIDCLEWGKTGKEYGLTMTPADKSPCFNEVTWENATFLKRGFLPDHQFPFLIHPTMPMREIHESIRWTKDARNTQDHVRSLCLLAWHNGKEEYEKFVSTIRSVPIGRALAIPNLENLRRNWLELF.

Residues 1-22 (MGSQVSTQRSGSHENSNSATEG) form a disordered region. G2 carries the N-myristoyl glycine; by host lipid modification. The Cytoplasmic segment spans residues 2–1503 (GSQVSTQRSG…HLNRAVLVMQ (1502 aa)). Amphipathic alpha-helix regions lie at residues 566–588 (GDRVADVIESSIGDSVSKALTPA) and 568–588 (RVADVIESSIGDSVSKALTPA). Active-site for protease 2A activity residues include H883 and D901. The Zn(2+) site is built by C918 and C920. The For protease 2A activity role is filled by C972. Zn(2+)-binding residues include C978 and H980. The interval 1112–1184 (SASWLKKFND…EQSAASQEDL (73 aa)) is membrane-binding. Residues 1112–1250 (SASWLKKFND…SPGTGKSLAT (139 aa)) are oligomerization. An RNA-binding region spans residues 1133–1137 (FNKIS). The 159-residue stretch at 1216–1374 (EKRMNNYMQF…YKTDLGRLDA (159 aa)) folds into the SF3 helicase domain. ATP is bound at residue 1240–1247 (GSPGTGKS). The Zn(2+) site is built by C1381, C1392, and C1397. The segment at 1381 to 1397 (CTENNTANFKRCSPLVC) adopts a C4-type; degenerate zinc-finger fold. The interval 1424–1431 (EYNNRSAI) is RNA-binding. The tract at residues 1435–1440 (IEALFQ) is oligomerization. The stretch at 1504-1519 (SIATVVAVVSLVYVIY) is an intramembrane region. Topologically, residues 1520–2193 (KLFAGFQGAY…NLRRNWLELF (674 aa)) are cytoplasmic. Residue Y1529 is modified to O-(5'-phospho-RNA)-tyrosine. The Peptidase C3 domain maps to 1549-1727 (GPSLDFALSL…FCAGLKRSYF (179 aa)). Active-site for protease 3C activity residues include H1588, E1619, and C1695. Positions 1958-2073 (GSLFAFDYSG…ASYPFPIDCL (116 aa)) constitute a RdRp catalytic domain. The Mg(2+) site is built by D1964 and D2060.

It belongs to the picornaviruses polyprotein family. In terms of assembly, interacts with capsid protein VP1 and capsid protein VP3 to form heterotrimeric protomers. Interacts with capsid protein VP0, and capsid protein VP3 to form heterotrimeric protomers. Five protomers subsequently associate to form pentamers which serve as building blocks for the capsid. Interacts with capsid protein VP2, capsid protein VP3 and capsid protein VP4 following cleavage of capsid protein VP0. Interacts with host SCARB2. Interacts with host ARF6; this interaction mediates viral endocytosis. As to quaternary structure, interacts with capsid protein VP1 and capsid protein VP3 in the mature capsid. Interacts with host SCARB2. In terms of assembly, interacts with capsid protein VP0 and capsid protein VP1 to form heterotrimeric protomers. Five protomers subsequently associate to form pentamers which serve as building blocks for the capsid. Interacts with capsid protein VP4 in the mature capsid. Interacts with protein 2C; this interaction may be important for virion morphogenesis. Interacts with capsid protein VP1 and capsid protein VP3. As to quaternary structure, homodimer. Interacts with host SPOP; this interaction promotes protease 2A ubiquitination and subsequent degradation. In terms of assembly, interacts with host BAX; this interaction activates the mitochondrial apoptotic pathway. Interacts with host ILF2. Homohexamer; forms a hexameric ring structure with 6-fold symmetry characteristic of AAA+ ATPases. Interacts (via N-terminus) with host RTN3 (via reticulon domain); this interaction is important for viral replication. Interacts with capsid protein VP3; this interaction may be important for virion morphogenesis. As to quaternary structure, interacts with protein 3CD. In terms of assembly, homodimer. Interacts with host GBF1. Interacts (via GOLD domain) with host ACBD3 (via GOLD domain); this interaction allows the formation of a viral protein 3A/ACBD3 heterotetramer with a 2:2 stoichiometry, which will stimulate the recruitment of host PI4KB in order to synthesize PI4P at the viral RNA replication sites. Interacts with RNA-directed RNA polymerase. As to quaternary structure, interacts with host IFIH1/MDA5; this interaction inhibits host IFIH1. Interacts with host RIGI. In terms of assembly, interacts with protein 3AB and with RNA-directed RNA polymerase. Interacts with host PPP1R15A. Interacts with Viral protein genome-linked and with protein 3CD. Interacts with host NLRP3. Mg(2+) serves as cofactor. In terms of processing, specific enzymatic cleavages in vivo by the viral proteases yield processing intermediates and the mature proteins. Myristoylation is required for the formation of pentamers during virus assembly. Further assembly of 12 pentamers and a molecule of genomic RNA generates the provirion. Post-translationally, during virion maturation, immature virions are rendered infectious following cleavage of VP0 into VP4 and VP2. This maturation seems to be an autocatalytic event triggered by the presence of RNA in the capsid and it is followed by a conformational change infectious virion. In terms of processing, myristoylation is required during RNA encapsidation and formation of the mature virus particle. VPg is uridylylated by the polymerase into VPg-pUpU. This acts as a nucleotide-peptide primer for the genomic RNA replication.

The protein localises to the virion. It is found in the host cytoplasm. Its subcellular location is the host cytoplasmic vesicle membrane. It localises to the host nucleus. It catalyses the reaction a ribonucleoside 5'-triphosphate + H2O = a ribonucleoside 5'-diphosphate + phosphate + H(+). The catalysed reaction is Selective cleavage of Tyr-|-Gly bond in the picornavirus polyprotein.. It carries out the reaction RNA(n) + a ribonucleoside 5'-triphosphate = RNA(n+1) + diphosphate. The enzyme catalyses Selective cleavage of Gln-|-Gly bond in the poliovirus polyprotein. In other picornavirus reactions Glu may be substituted for Gln, and Ser or Thr for Gly.. Its activity is regulated as follows. Replication or transcription is subject to high level of random mutations by the nucleotide analog ribavirin. In terms of biological role, forms an icosahedral capsid of pseudo T=3 symmetry with capsid proteins VP2 and VP3. The capsid is 300 Angstroms in diameter, composed of 60 copies of each capsid protein and enclosing the viral positive strand RNA genome. Capsid protein VP1 mainly forms the vertices of the capsid. Capsid protein VP1, together with VP2, interacts with host cell receptor SCARB2 to provide virion attachment to target host cells. This attachment induces virion internalization predominantly through clathrin-dependent endocytosis. After binding to its receptor, the capsid undergoes conformational changes. Capsid protein VP1 N-terminus (that contains an amphipathic alpha-helix) and capsid protein VP4 are externalized. Together, they shape a pore in the host membrane through which viral genome is translocated to host cell cytoplasm. Its function is as follows. Forms an icosahedral capsid of pseudo T=3 symmetry with capsid proteins VP2 and VP3. The capsid is 300 Angstroms in diameter, composed of 60 copies of each capsid protein and enclosing the viral positive strand RNA genome. Capsid protein VP2, together with VP1, interacts with host cell receptor SCARB2 to provide virion attachment to target host cells. Forms an icosahedral capsid of pseudo T=3 symmetry with capsid proteins VP2 and VP3. The capsid is 300 Angstroms in diameter, composed of 60 copies of each capsid protein and enclosing the viral positive strand RNA genome. Functionally, lies on the inner surface of the capsid shell. After binding to the host receptor, the capsid undergoes conformational changes. Capsid protein VP4 is released, Capsid protein VP1 N-terminus is externalized, and together, they shape a pore in the host membrane through which the viral genome is translocated into the host cell cytoplasm. In terms of biological role, component of immature procapsids, which is cleaved into capsid proteins VP4 and VP2 after maturation. Allows the capsid to remain inactive before the maturation step. Its function is as follows. Cysteine protease that cleaves viral polyprotein and specific host proteins. It is responsible for the autocatalytic cleavage between the P1 and P2 regions, which is the first cleavage occurring in the polyprotein. Also cleaves the host translation initiation factor EIF4G1, in order to shut down the capped cellular mRNA translation. Inhibits the host nucleus-cytoplasm protein and RNA trafficking by cleaving host members of the nuclear pores. Counteracts stress granule formation probably by antagonizing its assembly or promoting its dissassembly. Cleaves and inhibits host IFIH1/MDA5, thereby inhibiting the type-I IFN production and the establishment of the antiviral state. Cleaves and inhibits host MAVS, thereby inhibiting the type-I IFN production and the establishment of the antiviral state. Plays an essential role in the virus replication cycle by acting as a viroporin. Creates a pore in the host endoplasmic reticulum and as a consequence releases Ca2+ in the cytoplasm of infected cell. In turn, high levels of cytoplasmic calcium may trigger membrane trafficking and transport of viral ER-associated proteins to viroplasms, sites of viral genome replication. Also activates the mitochondrial apoptotic pathway by activating host BAX. Functionally, induces and associates with structural rearrangements of intracellular membranes. Displays RNA-binding, nucleotide binding and NTPase activities. May play a role in virion morphogenesis and viral RNA encapsidation by interacting with the capsid protein VP3. In terms of biological role, localizes the viral replication complex to the surface of membranous vesicles. Together with protein 3CD binds the Cis-Active RNA Element (CRE) which is involved in RNA synthesis initiation. Acts as a cofactor to stimulate the activity of 3D polymerase, maybe through a nucleid acid chaperone activity. Its function is as follows. Localizes the viral replication complex to the surface of membranous vesicles. It inhibits host cell endoplasmic reticulum-to-Golgi apparatus transport and causes the disassembly of the Golgi complex, possibly through GBF1 interaction. This would result in depletion of MHC, trail receptors and IFN receptors at the host cell surface. Plays an essential role in viral RNA replication by recruiting ACBD3 and PI4KB at the viral replication sites, thereby allowing the formation of the rearranged membranous structures where viral replication takes place. Acts as a primer for viral RNA replication and remains covalently bound to viral genomic RNA. VPg is uridylylated prior to priming replication into VPg-pUpU. The oriI viral genomic sequence may act as a template for this. The VPg-pUpU is then used as primer on the genomic RNA poly(A) by the RNA-dependent RNA polymerase to replicate the viral genome. During genome replication, the VPg-RNA linkage is removed by the host TDP2, thereby accelerating replication. During the late stage of the replication cycle, host TDP2 is excluded from sites of viral RNA synthesis and encapsidation, allowing for the generation of progeny virions. Functionally, involved in the viral replication complex and viral polypeptide maturation. It exhibits protease activity with a specificity and catalytic efficiency that is different from protease 3C. Protein 3CD lacks polymerase activity. Protein 3CD binds to the 5'UTR of the viral genome. Regulates host protein expression by interacting with host PPP1R15A to support viral replication. In terms of biological role, major viral protease that mediates proteolytic processing of the polyprotein. Cleaves host EIF5B, contributing to host translation shutoff. Also cleaves host PABPC1, contributing to host translation shutoff. Disassembles host cytoplasmic stress granules by cleaving host G3BP1, although this effect is less prononced than the inhibition induced by protease 2A. Cleaves host RIGI and thus contributes to the inhibition of type I interferon production. Cleaves host IRF7 and thus contributes to the inhibition of type I interferon production. Cleaves host HNRNPA1 thereby increasing the translation of apoptosis protease activating factor APAF1, leading to apoptosis of the host cell. Cleaves host NLRP1, triggers host N-glycine-mediated degradation of the autoinhibitory NLRP1 N-terminal fragment. Cleaves and inactivates host GSDMD, preventing GSDMD-mediated pyroptosis. Also promotes apoptosis in infected cell through cleaving of host PINX1, a telomere binding protein in order to facilitate viral release. Impairs host PML-NBs production via PML cleavage and counter its antiviral activities. Its function is as follows. Replicates the viral genomic RNA on the surface of intracellular membranes. May form linear arrays of subunits that propagate along a strong head-to-tail interaction called interface-I. Covalently attaches UMP to a tyrosine of VPg, which is used to prime RNA synthesis. The positive stranded RNA genome is first replicated at virus induced membranous vesicles, creating a dsRNA genomic replication form. This dsRNA is then used as template to synthesize positive stranded RNA genomes. ss(+)RNA genomes are either translated, replicated or encapsidated. Facilitates the assembly of NLRP3 inflammasome complex and stimulates the cleavage of host pro-CASP1 and the secretion of IL-1beta. This is Genome polyprotein from Human enterovirus 71 (strain USA/BrCr/1970) (EV71).